The primary structure comprises 217 residues: U exon protein (217 aa).

2 disordered regions span residues 79 to 113 and 171 to 217; these read ISGE…GGRV and KEAP…WQRR. Residues 188–197 show a composition bias toward basic residues; it reads RGQRGRKRRC. A compositionally biased stretch (polar residues) spans 202–217; it reads GGFQQPTGANQAWQRR.

Belongs to the adenoviridae U exon protein family.

It is found in the host nucleus. Its subcellular location is the host nucleoplasm. It localises to the host nucleolus. In terms of biological role, might play a role in viral replication since it is associated with viral replication centers. Seems to have an effect on DBP localization. The polypeptide is U exon protein (Human adenovirus C serotype 5 (HAdV-5)).